An 84-amino-acid chain; its full sequence is Large ribosomal subunit protein bL27 (84 aa).

Belongs to the bacterial ribosomal protein bL27 family.

This is Large ribosomal subunit protein bL27 from Buchnera aphidicola subsp. Acyrthosiphon pisum (strain Tuc7).